We begin with the raw amino-acid sequence, 395 residues long: Succinyl-diaminopimelate desuccinylase (395 aa).

H74 is a binding site for Zn(2+). Residue D76 is part of the active site. Zn(2+) is bound at residue D107. Catalysis depends on E141, which acts as the Proton acceptor. Zn(2+) is bound by residues E142, E170, and H368.

Belongs to the peptidase M20A family. DapE subfamily. As to quaternary structure, homodimer. Zn(2+) is required as a cofactor. The cofactor is Co(2+).

The catalysed reaction is N-succinyl-(2S,6S)-2,6-diaminopimelate + H2O = (2S,6S)-2,6-diaminopimelate + succinate. The protein operates within amino-acid biosynthesis; L-lysine biosynthesis via DAP pathway; LL-2,6-diaminopimelate from (S)-tetrahydrodipicolinate (succinylase route): step 3/3. Its function is as follows. Catalyzes the hydrolysis of N-succinyl-L,L-diaminopimelic acid (SDAP), forming succinate and LL-2,6-diaminopimelate (DAP), an intermediate involved in the bacterial biosynthesis of lysine and meso-diaminopimelic acid, an essential component of bacterial cell walls. This Chelativorans sp. (strain BNC1) protein is Succinyl-diaminopimelate desuccinylase.